We begin with the raw amino-acid sequence, 376 residues long: Chaperone protein DnaJ (376 aa).

The region spanning 5-70 is the J domain; the sequence is DYYEVLGVGR…DKKAAYDQFG (66 aa). Residues 132–210 form a CR-type zinc finger; it reads GLTKELRIPT…CHGDGRVEKS (79 aa). Cysteine 145, cysteine 148, cysteine 162, cysteine 165, cysteine 184, cysteine 187, cysteine 198, and cysteine 201 together coordinate Zn(2+). CXXCXGXG motif repeat units lie at residues 145–152, 162–169, 184–191, and 198–205; these read CDLCDGSG, CTTCHGQG, CPTCHGRG, and CTKCHGDG.

It belongs to the DnaJ family. In terms of assembly, homodimer. It depends on Zn(2+) as a cofactor.

It is found in the cytoplasm. Functionally, participates actively in the response to hyperosmotic and heat shock by preventing the aggregation of stress-denatured proteins and by disaggregating proteins, also in an autonomous, DnaK-independent fashion. Unfolded proteins bind initially to DnaJ; upon interaction with the DnaJ-bound protein, DnaK hydrolyzes its bound ATP, resulting in the formation of a stable complex. GrpE releases ADP from DnaK; ATP binding to DnaK triggers the release of the substrate protein, thus completing the reaction cycle. Several rounds of ATP-dependent interactions between DnaJ, DnaK and GrpE are required for fully efficient folding. Also involved, together with DnaK and GrpE, in the DNA replication of plasmids through activation of initiation proteins. This Shewanella putrefaciens (strain CN-32 / ATCC BAA-453) protein is Chaperone protein DnaJ.